Reading from the N-terminus, the 72-residue chain is Translation initiation factor IF-1 (72 aa).

In terms of domain architecture, S1-like spans 1 to 72 (MAKDGVIEVE…NRGRITYRYK (72 aa)).

It belongs to the IF-1 family. Component of the 30S ribosomal translation pre-initiation complex which assembles on the 30S ribosome in the order IF-2 and IF-3, IF-1 and N-formylmethionyl-tRNA(fMet); mRNA recruitment can occur at any time during PIC assembly.

It is found in the cytoplasm. In terms of biological role, one of the essential components for the initiation of protein synthesis. Stabilizes the binding of IF-2 and IF-3 on the 30S subunit to which N-formylmethionyl-tRNA(fMet) subsequently binds. Helps modulate mRNA selection, yielding the 30S pre-initiation complex (PIC). Upon addition of the 50S ribosomal subunit IF-1, IF-2 and IF-3 are released leaving the mature 70S translation initiation complex. This chain is Translation initiation factor IF-1, found in Bifidobacterium adolescentis (strain ATCC 15703 / DSM 20083 / NCTC 11814 / E194a).